The primary structure comprises 429 residues: Carbamoyl phosphate synthase arginine-specific small chain (429 aa).

The transit peptide at 1-20 (MIRVIQPPLIASKQLFRRYL) directs the protein to the mitochondrion. Residues 218-406 (HIAVLDCGAK…FENIEQYRAT (189 aa)) form the Glutamine amidotransferase type-1 domain. The active-site Nucleophile is cysteine 295. Catalysis depends on residues histidine 379 and glutamate 381.

The protein belongs to the CarA family. As to quaternary structure, heterodimer composed of 2 chains; the small (or glutamine) chain promotes the hydrolysis of glutamine to ammonia, which is used by the large (or ammonia) chain to synthesize carbamoyl phosphate.

The protein localises to the mitochondrion matrix. It catalyses the reaction hydrogencarbonate + L-glutamine + 2 ATP + H2O = carbamoyl phosphate + L-glutamate + 2 ADP + phosphate + 2 H(+). The enzyme catalyses L-glutamine + H2O = L-glutamate + NH4(+). The protein operates within amino-acid biosynthesis; L-arginine biosynthesis; carbamoyl phosphate from bicarbonate: step 1/1. In terms of biological role, small subunit of the arginine-specific carbamoyl phosphate synthase (CPSase). CPSase catalyzes the formation of carbamoyl phosphate from the ammonia moiety of glutamine, carbonate, and phosphate donated by ATP, the first step of the arginine biosynthetic pathway. The small subunit (glutamine amidotransferase) binds and cleaves glutamine to supply the large subunit with the substrate ammonia. The protein is Carbamoyl phosphate synthase arginine-specific small chain (CPA1) of Debaryomyces hansenii (strain ATCC 36239 / CBS 767 / BCRC 21394 / JCM 1990 / NBRC 0083 / IGC 2968) (Yeast).